The following is a 470-amino-acid chain: Glutamyl-tRNA(Gln) amidotransferase subunit A (470 aa).

Active-site charge relay system residues include Lys-71 and Ser-146. The active-site Acyl-ester intermediate is the Ser-170.

Belongs to the amidase family. GatA subfamily. Heterotrimer of A, B and C subunits.

The catalysed reaction is L-glutamyl-tRNA(Gln) + L-glutamine + ATP + H2O = L-glutaminyl-tRNA(Gln) + L-glutamate + ADP + phosphate + H(+). In terms of biological role, allows the formation of correctly charged Gln-tRNA(Gln) through the transamidation of misacylated Glu-tRNA(Gln) in organisms which lack glutaminyl-tRNA synthetase. The reaction takes place in the presence of glutamine and ATP through an activated gamma-phospho-Glu-tRNA(Gln). This chain is Glutamyl-tRNA(Gln) amidotransferase subunit A, found in Akkermansia muciniphila (strain ATCC BAA-835 / DSM 22959 / JCM 33894 / BCRC 81048 / CCUG 64013 / CIP 107961 / Muc).